The sequence spans 141 residues: Molybdopterin synthase catalytic subunit 2 (141 aa).

Substrate contacts are provided by residues 37–39 (MIR), 103–104 (HR), lysine 119, and 126–128 (KHQ).

It belongs to the MoaE family. As to quaternary structure, heterotetramer of 2 MoaD subunits and 2 MoaE subunits. Also stable as homodimer. The enzyme changes between these two forms during catalysis.

The catalysed reaction is 2 [molybdopterin-synthase sulfur-carrier protein]-C-terminal-Gly-aminoethanethioate + cyclic pyranopterin phosphate + H2O = molybdopterin + 2 [molybdopterin-synthase sulfur-carrier protein]-C-terminal Gly-Gly + 2 H(+). Its pathway is cofactor biosynthesis; molybdopterin biosynthesis. Converts molybdopterin precursor Z into molybdopterin. This requires the incorporation of two sulfur atoms into precursor Z to generate a dithiolene group. The sulfur is provided by MoaD. This chain is Molybdopterin synthase catalytic subunit 2 (moaE2), found in Mycobacterium tuberculosis (strain CDC 1551 / Oshkosh).